The following is a 66-amino-acid chain: U1-theraphotoxin-Cg1d 1 (66 aa).

Positions 1–21 (MKMSALFVIFGLALLFCNSFA) are cleaved as a signal peptide. Positions 22-29 (AELKATGR) are excised as a propeptide. Intrachain disulfides connect cysteine 31–cysteine 46, cysteine 38–cysteine 51, and cysteine 45–cysteine 58. The residue at position 63 (proline 63) is a Proline amide.

It belongs to the neurotoxin 10 (Hwtx-1) family. 46 (Jztx-7/10/12) subfamily. In terms of tissue distribution, expressed by the venom gland.

The protein resides in the secreted. Functionally, probable ion channel inhibitor. The polypeptide is U1-theraphotoxin-Cg1d 1 (Chilobrachys guangxiensis (Chinese earth tiger tarantula)).